Here is a 39-residue protein sequence, read N- to C-terminus: Natriuretic peptide TNPc (39 aa).

C9 and C25 are joined by a disulfide.

Belongs to the natriuretic peptide family. Expressed by the venom gland.

The protein resides in the secreted. Its function is as follows. Snake venom natriuretic peptide that exhibits vasoactive and hypotensive activity. Produces a near complete relaxation in pre-contracted aortae by activating the natriuretic peptide receptor 1 (NPR1). Stimulates cGMP production through the natriuretic peptide receptor 1 (NPR1) with high potencies for the rat NPR1 (EC(50)=100 nM), and very weak potencies over human NPR1 (28% activation at 10 uM). In vivo, reduces both systolic and diastolic blood pressure with no effect on heart rate, when intravenously injected in conscious rabbits. Also enhances the bradycardia due to cardiac afferent stimulation (Bezold-Jarisch reflex). The polypeptide is Natriuretic peptide TNPc (Oxyuranus microlepidotus (Inland taipan)).